Consider the following 165-residue polypeptide: Regulator of ribonuclease activity A (165 aa).

This sequence belongs to the RraA family. In terms of assembly, homotrimer. Binds to both RNA-binding sites in the C-terminal region of Rne and to RhlB.

The protein localises to the cytoplasm. Globally modulates RNA abundance by binding to RNase E (Rne) and regulating its endonucleolytic activity. Can modulate Rne action in a substrate-dependent manner by altering the composition of the degradosome. Modulates RNA-binding and helicase activities of the degradosome. The sequence is that of Regulator of ribonuclease activity A from Haemophilus ducreyi (strain 35000HP / ATCC 700724).